Consider the following 171-residue polypeptide: Nicotinamide-nucleotide adenylyltransferase (171 aa).

It belongs to the archaeal NMN adenylyltransferase family.

Its subcellular location is the cytoplasm. It carries out the reaction beta-nicotinamide D-ribonucleotide + ATP + H(+) = diphosphate + NAD(+). It functions in the pathway cofactor biosynthesis; NAD(+) biosynthesis; NAD(+) from nicotinamide D-ribonucleotide: step 1/1. This is Nicotinamide-nucleotide adenylyltransferase from Methanococcus maripaludis (strain DSM 14266 / JCM 13030 / NBRC 101832 / S2 / LL).